Reading from the N-terminus, the 281-residue chain is Histidine biosynthesis bifunctional protein hisIE, chloroplastic (281 aa).

The transit peptide at 1 to 50 directs the protein to the chloroplast; that stretch reads MAVSYNALAQSLARSSCFIPKPYSFRDTKLRSRSNVVFACNDNKNIALQA. The phosphoribosyl-AMP cyclohydrolase stretch occupies residues 51 to 178; sequence KVDNLLDRIK…NKLALTTLYS (128 aa). The phosphoribosyl-ATP pyrophosphohydrolase stretch occupies residues 179–281; the sequence is LESIISKRKE…GIEEKQNRTK (103 aa).

The protein in the N-terminal section; belongs to the PRA-CH family. In the C-terminal section; belongs to the PRA-PH family. Ubiquitously expressed throughout development.

The protein localises to the plastid. Its subcellular location is the chloroplast. It catalyses the reaction 1-(5-phospho-beta-D-ribosyl)-ATP + H2O = 1-(5-phospho-beta-D-ribosyl)-5'-AMP + diphosphate + H(+). The enzyme catalyses 1-(5-phospho-beta-D-ribosyl)-5'-AMP + H2O = 1-(5-phospho-beta-D-ribosyl)-5-[(5-phospho-beta-D-ribosylamino)methylideneamino]imidazole-4-carboxamide. It functions in the pathway amino-acid biosynthesis; L-histidine biosynthesis; L-histidine from 5-phospho-alpha-D-ribose 1-diphosphate: step 2/9. Its pathway is amino-acid biosynthesis; L-histidine biosynthesis; L-histidine from 5-phospho-alpha-D-ribose 1-diphosphate: step 3/9. The sequence is that of Histidine biosynthesis bifunctional protein hisIE, chloroplastic (HISN2) from Arabidopsis thaliana (Mouse-ear cress).